Here is an 856-residue protein sequence, read N- to C-terminus: Leucine--tRNA ligase (856 aa).

Residues 53 to 63 carry the 'HIGH' region motif; the sequence is PYPSGNLHMGH. A 'KMSKS' region motif is present at residues 622–626; it reads KMSKS. K625 provides a ligand contact to ATP.

It belongs to the class-I aminoacyl-tRNA synthetase family.

It localises to the cytoplasm. The catalysed reaction is tRNA(Leu) + L-leucine + ATP = L-leucyl-tRNA(Leu) + AMP + diphosphate. In Prochlorococcus marinus (strain MIT 9312), this protein is Leucine--tRNA ligase.